Reading from the N-terminus, the 962-residue chain is Protease 3 (962 aa).

The first 23 residues, 1–23 (MPRSTWFKALLLLVALWAPLSQA), serve as a signal peptide directing secretion. H88 lines the Zn(2+) pocket. E91 serves as the catalytic Proton acceptor. The Zn(2+) site is built by H92 and E169.

The protein belongs to the peptidase M16 family. Monomer. Requires Zn(2+) as cofactor.

It localises to the periplasm. It catalyses the reaction Preferential cleavage of 16-Tyr-|-Leu-17 and 25-Phe-|-Tyr-26 bonds of oxidized insulin B chain. Also acts on other substrates of Mw less than 7 kDa such as insulin and glucagon.. Endopeptidase that degrades small peptides of less than 7 kDa, such as glucagon and insulin. The polypeptide is Protease 3 (ptrA) (Escherichia coli O157:H7).